The chain runs to 161 residues: Small ribosomal subunit protein uS9 (161 aa).

It belongs to the universal ribosomal protein uS9 family.

In Rickettsia prowazekii (strain Madrid E), this protein is Small ribosomal subunit protein uS9 (rpsI).